The following is a 332-amino-acid chain: Thiamine thiazole synthase (332 aa).

Substrate is bound by residues C87, 108-109 (EA), G116, and V184. Position 221 is a 2,3-didehydroalanine (Cys) (C221). Residues D223, H238, M290, and 300-302 (RMG) contribute to the substrate site.

Belongs to the THI4 family. Homooctamer. The cofactor is Fe cation. Post-translationally, during the catalytic reaction, a sulfide is transferred from Cys-221 to a reaction intermediate, generating a dehydroalanine residue.

The protein resides in the cytoplasm. The protein localises to the nucleus. It carries out the reaction [ADP-thiazole synthase]-L-cysteine + glycine + NAD(+) = [ADP-thiazole synthase]-dehydroalanine + ADP-5-ethyl-4-methylthiazole-2-carboxylate + nicotinamide + 3 H2O + 2 H(+). In terms of biological role, involved in biosynthesis of the thiamine precursor thiazole. Catalyzes the conversion of NAD and glycine to adenosine diphosphate 5-(2-hydroxyethyl)-4-methylthiazole-2-carboxylic acid (ADT), an adenylated thiazole intermediate. The reaction includes an iron-dependent sulfide transfer from a conserved cysteine residue of the protein to a thiazole intermediate. The enzyme can only undergo a single turnover, which suggests it is a suicide enzyme. May have additional roles in adaptation to various stress conditions and in DNA damage tolerance. The chain is Thiamine thiazole synthase from Aspergillus fumigatus (strain ATCC MYA-4609 / CBS 101355 / FGSC A1100 / Af293) (Neosartorya fumigata).